The sequence spans 72 residues: Translation initiation factor IF-1 (72 aa).

The 72-residue stretch at 1-72 (MAKDDVIEID…DKGRITFRYK (72 aa)) folds into the S1-like domain.

The protein belongs to the IF-1 family. As to quaternary structure, component of the 30S ribosomal translation pre-initiation complex which assembles on the 30S ribosome in the order IF-2 and IF-3, IF-1 and N-formylmethionyl-tRNA(fMet); mRNA recruitment can occur at any time during PIC assembly.

It localises to the cytoplasm. Its function is as follows. One of the essential components for the initiation of protein synthesis. Stabilizes the binding of IF-2 and IF-3 on the 30S subunit to which N-formylmethionyl-tRNA(fMet) subsequently binds. Helps modulate mRNA selection, yielding the 30S pre-initiation complex (PIC). Upon addition of the 50S ribosomal subunit IF-1, IF-2 and IF-3 are released leaving the mature 70S translation initiation complex. The polypeptide is Translation initiation factor IF-1 (Sulfurovum sp. (strain NBC37-1)).